The chain runs to 460 residues: Phosphoenolpyruvate carboxylase (460 aa).

Belongs to the PEPCase type 2 family. As to quaternary structure, homotetramer. Mg(2+) serves as cofactor.

It carries out the reaction oxaloacetate + phosphate = phosphoenolpyruvate + hydrogencarbonate. In terms of biological role, catalyzes the irreversible beta-carboxylation of phosphoenolpyruvate (PEP) to form oxaloacetate (OAA), a four-carbon dicarboxylic acid source for the tricarboxylic acid cycle. The sequence is that of Phosphoenolpyruvate carboxylase from Pyrobaculum arsenaticum (strain DSM 13514 / JCM 11321 / PZ6).